A 274-amino-acid polypeptide reads, in one-letter code: 2,3,4,5-tetrahydropyridine-2,6-dicarboxylate N-succinyltransferase (274 aa).

Residues Arg107 and Asp144 each coordinate substrate.

This sequence belongs to the transferase hexapeptide repeat family. As to quaternary structure, homotrimer.

It is found in the cytoplasm. The enzyme catalyses (S)-2,3,4,5-tetrahydrodipicolinate + succinyl-CoA + H2O = (S)-2-succinylamino-6-oxoheptanedioate + CoA. It participates in amino-acid biosynthesis; L-lysine biosynthesis via DAP pathway; LL-2,6-diaminopimelate from (S)-tetrahydrodipicolinate (succinylase route): step 1/3. This Cereibacter sphaeroides (strain ATCC 17025 / ATH 2.4.3) (Rhodobacter sphaeroides) protein is 2,3,4,5-tetrahydropyridine-2,6-dicarboxylate N-succinyltransferase.